Consider the following 72-residue polypeptide: Beta-defensin 104A (72 aa).

The N-terminal stretch at 1 to 22 is a signal peptide; sequence MRRLVLLLAISLLLYQDLPVRS. 3 disulfides stabilise this stretch: Cys-30–Cys-57, Cys-37–Cys-51, and Cys-41–Cys-58.

The protein belongs to the beta-defensin family.

Its subcellular location is the secreted. In terms of biological role, has antimicrobial activity. The protein is Beta-defensin 104A (DEFB104A) of Pongo pygmaeus (Bornean orangutan).